The chain runs to 137 residues: Glutamyl-tRNA(Gln) amidotransferase subunit C, chloroplastic/mitochondrial (137 aa).

It belongs to the GatC family. As to quaternary structure, subunit of the heterotrimeric GatCAB amidotransferase (AdT) complex, composed of A, B and C subunits.

Its subcellular location is the mitochondrion. The protein resides in the plastid. The protein localises to the chloroplast. The enzyme catalyses L-glutamyl-tRNA(Gln) + L-glutamine + ATP + H2O = L-glutaminyl-tRNA(Gln) + L-glutamate + ADP + phosphate + H(+). Allows the formation of correctly charged Gln-tRNA(Gln) through the transamidation of misacylated Glu-tRNA(Gln) in chloroplasts and mitochondria. The reaction takes place in the presence of glutamine and ATP through an activated gamma-phospho-Glu-tRNA(Gln). The sequence is that of Glutamyl-tRNA(Gln) amidotransferase subunit C, chloroplastic/mitochondrial from Vitis vinifera (Grape).